The sequence spans 309 residues: DNA-directed RNA polymerase subunit alpha (309 aa).

The segment at 1-225 (MFQVQCLESA…SLFKLVNSAD (225 aa)) is alpha N-terminal domain (alpha-NTD). Positions 237 to 309 (IVQVSQTDVT…LHERFNLTLN (73 aa)) are alpha C-terminal domain (alpha-CTD).

Belongs to the RNA polymerase alpha chain family. In plastids the minimal PEP RNA polymerase catalytic core is composed of four subunits: alpha, beta, beta', and beta''. When a (nuclear-encoded) sigma factor is associated with the core the holoenzyme is formed, which can initiate transcription.

The protein localises to the plastid. The protein resides in the chloroplast. The enzyme catalyses RNA(n) + a ribonucleoside 5'-triphosphate = RNA(n+1) + diphosphate. Functionally, DNA-dependent RNA polymerase catalyzes the transcription of DNA into RNA using the four ribonucleoside triphosphates as substrates. In Emiliania huxleyi (Coccolithophore), this protein is DNA-directed RNA polymerase subunit alpha.